The sequence spans 475 residues: MVKTNLNKGYVTQIIGPVLDIKFSEGNLPPIYSAIKIILDDNTETIVEVQQLLGDNKVRAVSMRSTDGLKRGVEAIDLGTPINVPVGTPTLGRIFNVIGEPVDEQGEVKYDETLPIHRDAPAFTELETKPSIFETGIKVVDLLAPYRRGGKIGLFGGAGVGKTVLIMELINNIAKAHGGVSVFGGVGERTREGNDLYEEMKESGVINEKNFAESKVALVYGQMNEPPGARMRVGLTALTMAEYFRDVNKQDVLLFIDNIFRFTQAGSEVSALLGRMPSAVGYQPTLATEMGALQERITSTTQGSITSIQAVYVPADDLTDPAPATTFAHLDATTVLSRGLAAKGIYPAVDPLDSTSTMLQVGIVTEEHYATAENVKETLQRYKELQDIIAILGIDELSEEDRLTVARARKVERFLSQPFFVAEIFTGSPGEYVSLEDTIKGFLMVLNGELDDLPEQAFYLVGNIDQAIAKAETLK.

ATP is bound at residue Gly156–Thr163.

It belongs to the ATPase alpha/beta chains family. In terms of assembly, F-type ATPases have 2 components, CF(1) - the catalytic core - and CF(0) - the membrane proton channel. CF(1) has five subunits: alpha(3), beta(3), gamma(1), delta(1), epsilon(1). CF(0) has four main subunits: a(1), b(1), b'(1) and c(9-12).

Its subcellular location is the plastid. It localises to the chloroplast thylakoid membrane. The enzyme catalyses ATP + H2O + 4 H(+)(in) = ADP + phosphate + 5 H(+)(out). In terms of biological role, produces ATP from ADP in the presence of a proton gradient across the membrane. The catalytic sites are hosted primarily by the beta subunits. In Phaeodactylum tricornutum (strain CCAP 1055/1), this protein is ATP synthase subunit beta, chloroplastic.